We begin with the raw amino-acid sequence, 219 residues long: Adenylate kinase (219 aa).

10 to 15 (GAGKGT) contributes to the ATP binding site. An NMP region spans residues 30-59 (STGDMLRAAVKAGTPLGQQAKKVMDAGELV). Residues Thr31, Arg36, 57 to 59 (ELV), 85 to 88 (GFPR), and Gln92 contribute to the AMP site. Positions 122–159 (GRRVHPGSGRVYHVEHNPPKEEGKDDVTGEPLVQRDDD) are LID. Residues Arg123 and 132 to 133 (VY) contribute to the ATP site. Residues 129–152 (SGRVYHVEHNPPKEEGKDDVTGEP) are disordered. Positions 133 to 152 (YHVEHNPPKEEGKDDVTGEP) are enriched in basic and acidic residues. AMP-binding residues include Arg156 and Arg167. Gly203 contributes to the ATP binding site.

Belongs to the adenylate kinase family. As to quaternary structure, monomer.

It is found in the cytoplasm. The catalysed reaction is AMP + ATP = 2 ADP. The protein operates within purine metabolism; AMP biosynthesis via salvage pathway; AMP from ADP: step 1/1. In terms of biological role, catalyzes the reversible transfer of the terminal phosphate group between ATP and AMP. Plays an important role in cellular energy homeostasis and in adenine nucleotide metabolism. This chain is Adenylate kinase, found in Alkalilimnicola ehrlichii (strain ATCC BAA-1101 / DSM 17681 / MLHE-1).